The primary structure comprises 444 residues: Methionine aminopeptidase 2-1 (444 aa).

A disordered region spans residues 1 to 92 (MAAQVTEKLQ…VPVSNLFPNN (92 aa)). Polar residues predominate over residues 15-29 (NGQNGDAKANSTAVG). A compositionally biased stretch (acidic residues) spans 34-45 (GEAEDDSDDEKE). The span at 59-73 (AKKKKRKSKKKKKGG) shows a compositional bias: basic residues. His197 is a binding site for substrate. 3 residues coordinate a divalent metal cation: Asp217, Asp228, and His297. Residue His305 participates in substrate binding. Residues Glu330 and Glu425 each coordinate a divalent metal cation.

It belongs to the peptidase M24A family. Methionine aminopeptidase eukaryotic type 2 subfamily. Co(2+) is required as a cofactor. The cofactor is Zn(2+). Requires Mn(2+) as cofactor. Fe(2+) serves as cofactor.

It is found in the cytoplasm. It catalyses the reaction Release of N-terminal amino acids, preferentially methionine, from peptides and arylamides.. Cotranslationally removes the N-terminal methionine from nascent proteins. The N-terminal methionine is often cleaved when the second residue in the primary sequence is small and uncharged (Met-Ala-, Cys, Gly, Pro, Ser, Thr, or Val). This chain is Methionine aminopeptidase 2-1, found in Neosartorya fischeri (strain ATCC 1020 / DSM 3700 / CBS 544.65 / FGSC A1164 / JCM 1740 / NRRL 181 / WB 181) (Aspergillus fischerianus).